Reading from the N-terminus, the 103-residue chain is Large ribosomal subunit protein uL24 (103 aa).

The protein belongs to the universal ribosomal protein uL24 family. As to quaternary structure, part of the 50S ribosomal subunit.

In terms of biological role, one of two assembly initiator proteins, it binds directly to the 5'-end of the 23S rRNA, where it nucleates assembly of the 50S subunit. One of the proteins that surrounds the polypeptide exit tunnel on the outside of the subunit. The protein is Large ribosomal subunit protein uL24 of Haemophilus influenzae (strain ATCC 51907 / DSM 11121 / KW20 / Rd).